The sequence spans 55 residues: Large ribosomal subunit protein bL33 (55 aa).

Belongs to the bacterial ribosomal protein bL33 family.

In Paramagnetospirillum magneticum (strain ATCC 700264 / AMB-1) (Magnetospirillum magneticum), this protein is Large ribosomal subunit protein bL33.